A 115-amino-acid chain; its full sequence is Macrophage migration inhibitory factor (115 aa).

The Proton acceptor; via imino nitrogen role is filled by Pro2. Residues Lys33 and Ile65 each contribute to the substrate site. Lys78 is subject to N6-acetyllysine; alternate. N6-succinyllysine; alternate is present on Lys78. Asn98 provides a ligand contact to substrate.

It belongs to the MIF family. Homotrimer. Interacts with CD74 and CXCR2 extracellular domain and COPS5. Interacts with the USO1 and BNIPL.

The protein localises to the secreted. It localises to the cytoplasm. It catalyses the reaction 3-phenylpyruvate = enol-phenylpyruvate. The catalysed reaction is L-dopachrome = 5,6-dihydroxyindole-2-carboxylate. Functionally, pro-inflammatory cytokine involved in the innate immune response to bacterial pathogens. The expression of MIF at sites of inflammation suggests a role as mediator in regulating the function of macrophages in host defense. Counteracts the anti-inflammatory activity of glucocorticoids. Has phenylpyruvate tautomerase and dopachrome tautomerase activity (in vitro), but the physiological substrate is not known. It is not clear whether the tautomerase activity has any physiological relevance, and whether it is important for cytokine activity. The chain is Macrophage migration inhibitory factor from Mus musculus (Mouse).